A 1031-amino-acid polypeptide reads, in one-letter code: uncharacterized protein (1031 aa).

The segment at 50-85 (FKVQINLKTAAAHLDCSCSNDKQNCVHIIAALLKYN) adopts an SWIM-type zinc-finger fold. Positions 590-751 (RALEDNQFGG…WSCFDFVLPN (162 aa)) constitute a Helicase ATP-binding domain. 603–610 (DEMGLGKT) is an ATP binding site. Residues 702–705 (DEAQ) carry the DEAQ box motif. A Helicase C-terminal domain is found at 868–1022 (ALNIIYEALE…EDVNFFKSLS (155 aa)).

Belongs to the SNF2/RAD54 helicase family.

This is an uncharacterized protein from Mycoplasma genitalium (strain ATCC 33530 / DSM 19775 / NCTC 10195 / G37) (Mycoplasmoides genitalium).